The chain runs to 1520 residues: Accessory colonization factor AcfD (1520 aa).

A signal peptide spans 1–16 (MKIRIVSLIVLGFLIG). The N-palmitoyl cysteine moiety is linked to residue Cys-17. A lipid anchor (S-diacylglycerol cysteine) is attached at Cys-17. Residues 1085–1388 (GNRQPTGQWA…MFAQLKEWAE (304 aa)) enclose the Peptidase M60 domain.

It is found in the cell membrane. This chain is Accessory colonization factor AcfD (acfD), found in Vibrio cholerae serotype O1 (strain ATCC 39315 / El Tor Inaba N16961).